Here is a 393-residue protein sequence, read N- to C-terminus: NAD(P)H-quinone oxidoreductase subunit H, chloroplastic (393 aa).

It belongs to the complex I 49 kDa subunit family. As to quaternary structure, NDH is composed of at least 16 different subunits, 5 of which are encoded in the nucleus.

The protein resides in the plastid. The protein localises to the chloroplast thylakoid membrane. It catalyses the reaction a plastoquinone + NADH + (n+1) H(+)(in) = a plastoquinol + NAD(+) + n H(+)(out). It carries out the reaction a plastoquinone + NADPH + (n+1) H(+)(in) = a plastoquinol + NADP(+) + n H(+)(out). NDH shuttles electrons from NAD(P)H:plastoquinone, via FMN and iron-sulfur (Fe-S) centers, to quinones in the photosynthetic chain and possibly in a chloroplast respiratory chain. The immediate electron acceptor for the enzyme in this species is believed to be plastoquinone. Couples the redox reaction to proton translocation, and thus conserves the redox energy in a proton gradient. The polypeptide is NAD(P)H-quinone oxidoreductase subunit H, chloroplastic (Oryza nivara (Indian wild rice)).